Here is a 93-residue protein sequence, read N- to C-terminus: Defensin 5 (93 aa).

The first 19 residues, 1–19, serve as a signal peptide directing secretion; it reads MKKLVLLSALVLLALQVEA. The propeptide occupies 20–58; sequence EPTPKTDEGTKTDEQPGKEDQVVSVSIEGQGDPAFQDAV. 3 disulfide bridges follow: C64/C92, C66/C81, and C71/C91.

It belongs to the alpha-defensin family. As to expression, small intestine. Not present in heart, liver, spleen, kidney, large intestine and colon.

It localises to the secreted. Probably contributes to the antimicrobial barrier function of the small intestine. The polypeptide is Defensin 5 (Rattus norvegicus (Rat)).